The primary structure comprises 124 residues: Holo-[acyl-carrier-protein] synthase (124 aa).

Mg(2+)-binding residues include D7 and E55.

The protein belongs to the P-Pant transferase superfamily. AcpS family. The cofactor is Mg(2+).

The protein localises to the cytoplasm. It catalyses the reaction apo-[ACP] + CoA = holo-[ACP] + adenosine 3',5'-bisphosphate + H(+). Its function is as follows. Transfers the 4'-phosphopantetheine moiety from coenzyme A to a Ser of acyl-carrier-protein. The protein is Holo-[acyl-carrier-protein] synthase of Borreliella burgdorferi (strain ATCC 35210 / DSM 4680 / CIP 102532 / B31) (Borrelia burgdorferi).